A 203-amino-acid chain; its full sequence is tRNA (pseudouridine(54)-N(1))-methyltransferase (203 aa).

The S-adenosyl-L-methionine site is built by leucine 125, glycine 146, and cysteine 179.

Belongs to the methyltransferase superfamily. TrmY family. Homodimer.

It localises to the cytoplasm. It catalyses the reaction pseudouridine(54) in tRNA + S-adenosyl-L-methionine = N(1)-methylpseudouridine(54) in tRNA + S-adenosyl-L-homocysteine + H(+). Its function is as follows. Specifically catalyzes the N1-methylation of pseudouridine at position 54 (Psi54) in tRNAs. In Methanopyrus kandleri (strain AV19 / DSM 6324 / JCM 9639 / NBRC 100938), this protein is tRNA (pseudouridine(54)-N(1))-methyltransferase.